A 490-amino-acid chain; its full sequence is Velvet complex subunit 2 (490 aa).

Disordered regions lie at residues 23-148 and 295-316; these read LYHH…ESQQ and YQTQPTYSQGSSAYPSNGTYGP. Residues 54–70 are compositionally biased toward basic residues; sequence PPSHHFQLHPGHGHHQQ. Over residues 112-131 the composition is skewed to basic and acidic residues; sequence AAEHRDHPQHALDEPSRSHD. Residues 164 to 474 form the Velvet domain; sequence ATGRRYHLDV…AAQGIKIPIR (311 aa). The span at 295–313 shows a compositional bias: polar residues; the sequence is YQTQPTYSQGSSAYPSNGT.

Belongs to the velvet family. VelB subfamily. Component of the heterotrimeric velvet complex composed of LAE1, VEL1 and VEL2; VEL1 acting as a bridging protein between LAE1 and VEL2. Forms a heterodimeric complex with VOS1; the formation of the VEL2-VOS1 complex is light-dependent.

The protein resides in the nucleus. Its subcellular location is the cytoplasm. Component of the velvet transcription factor complex that controls sexual/asexual developmental ratio in response to light, promoting sexual development in the darkness while stimulating asexual sporulation under illumination. The velvet complex acts as a global regulator for secondary metabolite gene expression. Component of the VEL2-VOS1 heterodimeric complex that plays a dual role in activating genes associated with spore maturation and repressing certain development-associated genes. The VEL2-VOS1 complex binds DNA through the DNA-binding domain of VOS1 that recognizes an 11-nucleotide consensus sequence 5'-CTGGCCGCGGC-3' consisting of two motifs in the promoters of key developmental regulatory genes. Regulates expression of cellulase-encoding genes such as the cellobiohydrolase-encoding genes cbh1 and cbh2, the endo-beta-1,4-glucanase-encoding genes egl1 and egl2, and the beta-glucosidase-encoding gene bgl1. This Hypocrea jecorina (strain QM6a) (Trichoderma reesei) protein is Velvet complex subunit 2.